We begin with the raw amino-acid sequence, 452 residues long: Phosphoglucosamine mutase (452 aa).

Catalysis depends on serine 88, which acts as the Phosphoserine intermediate. Residues serine 88, aspartate 234, aspartate 236, and aspartate 238 each contribute to the Mg(2+) site. A Phosphoserine modification is found at serine 88.

Belongs to the phosphohexose mutase family. Requires Mg(2+) as cofactor. Post-translationally, activated by phosphorylation.

It catalyses the reaction alpha-D-glucosamine 1-phosphate = D-glucosamine 6-phosphate. Functionally, catalyzes the conversion of glucosamine-6-phosphate to glucosamine-1-phosphate. This chain is Phosphoglucosamine mutase, found in Methanococcus aeolicus (strain ATCC BAA-1280 / DSM 17508 / OCM 812 / Nankai-3).